The sequence spans 592 residues: Tetrathionate sensor histidine kinase TtrS (592 aa).

The next 2 helical transmembrane spans lie at 11 to 31 (VLAA…NIGI) and 307 to 327 (VGGV…VMLL). One can recognise a Histidine kinase domain in the interval 364–581 (GFAHELNQPL…VVTIHFLHEN (218 aa)). H367 carries the post-translational modification Phosphohistidine; by autocatalysis.

Autophosphorylated.

The protein resides in the cell inner membrane. The catalysed reaction is ATP + protein L-histidine = ADP + protein N-phospho-L-histidine.. Functionally, member of the two-component regulatory system TtrR/TtrS, which is required for synthesis of tetrathionate reductase. Probably functions as a sensor protein kinase which is autophosphorylated at a histidine residue in response to tetrathionate, and transfers its phosphate group to TtrR. During mice infection, the ability to use tetrathionate as an electron acceptor is a growth advantage for S.typhimurium over the competing microbiota in the lumen of the inflamed gut. The polypeptide is Tetrathionate sensor histidine kinase TtrS (ttrS) (Salmonella typhimurium (strain LT2 / SGSC1412 / ATCC 700720)).